An 837-amino-acid chain; its full sequence is Zinc fingers and homeoboxes protein 2 (837 aa).

Positions Met-1–Asp-41 are disordered. Residues Val-27–Gly-77 are interaction with EFNB1. A Phosphothreonine modification is found at Thr-37. Residue Lys-64 forms a Glycyl lysine isopeptide (Lys-Gly) (interchain with G-Cter in SUMO2) linkage. C2H2-type zinc fingers lie at residues Tyr-78–His-101 and Tyr-110–His-133. Residues Thr-167–Ser-180 are compositionally biased toward low complexity. The disordered stretch occupies residues Thr-167–Pro-203. Positions Pro-192–Pro-203 are enriched in basic and acidic residues. The required for homodimerization stretch occupies residues Asp-195 to Thr-358. 4 consecutive DNA-binding regions (homeobox) follow at residues Asn-263–Glu-324, Thr-439–Ile-501, Pro-530–Val-591, and Ser-628–Trp-690. The segment at Asn-263–Lys-446 is required for repressor activity. Residues Asn-263–Gly-497 form a required for interaction with NFYA region. The interval His-317–Lys-446 is required for nuclear localization. A disordered region spans residues Gly-404–Lys-445. The segment covering Pro-427–Thr-439 has biased composition (pro residues). A Glycyl lysine isopeptide (Lys-Gly) (interchain with G-Cter in SUMO2) cross-link involves residue Lys-455. The segment at Glu-754–Ala-837 is disordered. Phosphoserine occurs at positions 825 and 827.

Belongs to the ZHX family. Homodimer (via homeobox domain 1). Heterodimer with ZHX1 (via homeobox domain 1). Heterodimer with ZHX3 (via homeobox domain 1). Heterodimerization with ZHX1 is not necessary for repressor activity. Interacts (via homeobox domain) with NFYA (via N-terminus). Interacts with EFNB1 intracellular domain peptide; the interaction enhances ZHX2 transcriptional repression activity.

The protein resides in the nucleus. Functionally, acts as a transcriptional repressor. Represses the promoter activity of the CDC25C gene stimulated by NFYA. May play a role in retinal development where it regulates the composition of bipolar cell populations, by promoting differentiation of bipolar OFF-type cells. In the brain, may promote maintenance and suppress differentiation of neural progenitor cells in the developing cortex. The protein is Zinc fingers and homeoboxes protein 2 (ZHX2) of Pongo abelii (Sumatran orangutan).